The primary structure comprises 237 residues: Phosphoribosylaminoimidazole-succinocarboxamide synthase (237 aa).

Belongs to the SAICAR synthetase family.

The catalysed reaction is 5-amino-1-(5-phospho-D-ribosyl)imidazole-4-carboxylate + L-aspartate + ATP = (2S)-2-[5-amino-1-(5-phospho-beta-D-ribosyl)imidazole-4-carboxamido]succinate + ADP + phosphate + 2 H(+). The protein operates within purine metabolism; IMP biosynthesis via de novo pathway; 5-amino-1-(5-phospho-D-ribosyl)imidazole-4-carboxamide from 5-amino-1-(5-phospho-D-ribosyl)imidazole-4-carboxylate: step 1/2. This chain is Phosphoribosylaminoimidazole-succinocarboxamide synthase, found in Listeria monocytogenes serotype 4b (strain CLIP80459).